Consider the following 169-residue polypeptide: Neurotensin/neuromedin N (169 aa).

Residues 1-22 (MIGMNLQLVCLTLLAFSSWSLC) form the signal peptide.

The protein belongs to the neurotensin family. In terms of assembly, interacts with NTSR1. Interacts with SORT1. Interacts with SORL1. In terms of processing, neurotensin is cleaved and degraded by Angiotensin-converting enzyme (ACE) and neprilysin (MME).

Its subcellular location is the secreted. The protein localises to the cytoplasmic vesicle. The protein resides in the secretory vesicle. Neurotensin may play an endocrine or paracrine role in the regulation of fat metabolism. It causes contraction of smooth muscle. The chain is Neurotensin/neuromedin N (Nts) from Rattus norvegicus (Rat).